The primary structure comprises 483 residues: MLTLDTLNTMLAVSEEGMVEEMILALLASPQLVIFFEKFPRLKNAVTADLTRWREALRSRLKDARVPPELTEEVMCYQQSQLLSTPQFIVQLPQILALLHRLHSPYAAQAKQLTESNSTFTPALHTLFLQRWRLSLVVQATTLNQQLLEEEREQLLSDVQERMTLSGQLEPTLAENDNAAGRLWDMSAGQLKRGDYQLIVKYGEFLAAQPELMQLAEQLGRSREAKSVPKKDAPMETFRTLVREPATVPEQVDGIQQGDDILRLLPPELATLGITELEYEFYRRLVEKQLLTYRLHGEAWREKVTERPVVHQDVDEQPRGPFIVCVDTSGSMGGFNEQCAKAFCLALMRVALADNRRCFIMLFSTDVVRYELSGPEGIEQAIRFLSQRFRGGTDIASCFRAIIERMQGREWFDADAVVISDFIAQRLPDDVVSKVGELQRLHQHRFHAVAMSAHGKPGIMRIFNHIWRFDTGMRSRLLRRWRR.

This sequence belongs to the ViaA family. In terms of assembly, homodimer. Interacts with RavA.

Its subcellular location is the cytoplasm. In terms of biological role, component of the RavA-ViaA chaperone complex, which may act on the membrane to optimize the function of some of the respiratory chains. ViaA stimulates the ATPase activity of RavA. In Salmonella paratyphi A (strain ATCC 9150 / SARB42), this protein is Regulatory protein ViaA.